A 721-amino-acid polypeptide reads, in one-letter code: Polyribonucleotide nucleotidyltransferase (721 aa).

Positions 495 and 501 each coordinate Mg(2+). One can recognise a KH domain in the interval 562-621; it reads PRLLSFRIDPELIGTVIGPGGRTIKGITERTNTKIDIEDGGIVTIASHDGAAAEAAQRII. Positions 631-699 constitute an S1 motif domain; the sequence is GEVFSGTITR…NRGRINLTLR (69 aa). A disordered region spans residues 700–721; that stretch reads GVPQNGEETQSEPAPTPVAPLN.

It belongs to the polyribonucleotide nucleotidyltransferase family. Requires Mg(2+) as cofactor.

Its subcellular location is the cytoplasm. It catalyses the reaction RNA(n+1) + phosphate = RNA(n) + a ribonucleoside 5'-diphosphate. In terms of biological role, involved in mRNA degradation. Catalyzes the phosphorolysis of single-stranded polyribonucleotides processively in the 3'- to 5'-direction. This Prochlorococcus marinus (strain MIT 9303) protein is Polyribonucleotide nucleotidyltransferase.